The sequence spans 388 residues: S-adenosylmethionine synthase (388 aa).

H16 serves as a coordination point for ATP. D18 contacts Mg(2+). Residue E44 participates in K(+) binding. The L-methionine site is built by E57 and Q100. Residues 100 to 110 (QSPDIAQGVDK) are flexible loop. ATP-binding positions include 167–169 (DAK), 233–234 (RF), D242, 248–249 (RK), A265, and K269. D242 is a binding site for L-methionine. K273 contacts L-methionine.

This sequence belongs to the AdoMet synthase family. Homotetramer; dimer of dimers. The cofactor is Mg(2+). K(+) is required as a cofactor.

It is found in the cytoplasm. The enzyme catalyses L-methionine + ATP + H2O = S-adenosyl-L-methionine + phosphate + diphosphate. It functions in the pathway amino-acid biosynthesis; S-adenosyl-L-methionine biosynthesis; S-adenosyl-L-methionine from L-methionine: step 1/1. Its function is as follows. Catalyzes the formation of S-adenosylmethionine (AdoMet) from methionine and ATP. The overall synthetic reaction is composed of two sequential steps, AdoMet formation and the subsequent tripolyphosphate hydrolysis which occurs prior to release of AdoMet from the enzyme. This is S-adenosylmethionine synthase from Polynucleobacter necessarius subsp. necessarius (strain STIR1).